Consider the following 653-residue polypeptide: Chaperone protein DnaK (653 aa).

A Phosphothreonine; by autocatalysis modification is found at T200. The segment at 615 to 653 (AEAAAAGAAGAGGAGASAGGASQQQDDVVDAEFKEVKKD) is disordered. Over residues 623–632 (AGAGGAGASA) the composition is skewed to gly residues.

The protein belongs to the heat shock protein 70 family.

Its function is as follows. Acts as a chaperone. This is Chaperone protein DnaK from Paraburkholderia xenovorans (strain LB400).